We begin with the raw amino-acid sequence, 456 residues long: Multidrug resistance protein NorM (456 aa).

Helical transmembrane passes span Leu-11–Val-31, Ile-53–Ala-73, Val-92–Ile-112, Thr-126–Leu-146, Ala-159–Tyr-179, Gly-189–Ala-209, Phe-242–Val-262, Ile-268–Met-288, Ser-314–Leu-334, Leu-356–Ala-376, Ala-385–Leu-405, and Ala-417–Val-437.

This sequence belongs to the multi antimicrobial extrusion (MATE) (TC 2.A.66.1) family.

The protein resides in the cell inner membrane. Multidrug efflux pump that functions as a Na(+)/drug antiporter. Confers resistance to several drugs, such as norfloxacin, ciprofloxacin, ethidium, kanamycin and streptomycin. This Vibrio parahaemolyticus serotype O3:K6 (strain RIMD 2210633) protein is Multidrug resistance protein NorM (norM).